The following is a 552-amino-acid chain: Hyaluronan synthase 2 (552 aa).

Over 1–11 (MHCERFLCILR) the chain is Cytoplasmic. The helical transmembrane segment at 12–32 (IIGTTLFGVSLLLGITAAYIV) threads the bilayer. Residues 33–45 (GYQFIQTDNYYFS) lie on the Extracellular side of the membrane. Residues 46–66 (FGLYGAFLASHLIIQSLFAFL) form a helical membrane-spanning segment. Topologically, residues 67 to 374 (EHRKMKKSLE…NAMWFHKHHL (308 aa)) are cytoplasmic. Thr-110 is modified (phosphothreonine). Residue Lys-190 forms a Glycyl lysine isopeptide (Lys-Gly) (interchain with G-Cter in ubiquitin) linkage. Residue Ser-221 is glycosylated (O-linked (GlcNAc) serine). Position 328 is a phosphothreonine (Thr-328). A helical transmembrane segment spans residues 375–395 (WMTYEAVITGFFPFFLIATVI). Topologically, residues 396–402 (QLFYRGK) are extracellular. A helical transmembrane segment spans residues 403–423 (IWNILLFLLTVQLVGLIKSSF). Over 424–429 (ASCLRG) the chain is Cytoplasmic. A helical membrane pass occupies residues 430–450 (NIVMVFMSLYSVLYMSSLLPA). Residues 451 to 475 (KMFAIATINKAGWGTSGRKTIVVNF) are Extracellular-facing. A helical membrane pass occupies residues 476–496 (IGLIPVSVWFTILLGGVIFTI). Residues 497 to 510 (YKESKKPFSESKQT) lie on the Cytoplasmic side of the membrane. Residues 511-531 (VLIVGTLLYACYWVMLLTLYV) form a helical membrane-spanning segment. Residues 532 to 552 (VLINKCGRRKKGQQYDMVLDV) are Extracellular-facing.

Belongs to the NodC/HAS family. As to quaternary structure, homodimer; dimerization promotes enzymatic activity. Forms heterodimer with HAS3. Forms heterodimer with HAS1. It depends on Mg(2+) as a cofactor. In terms of processing, phosphorylation at Thr-328 is essential for hyaluronan synthase activity. Post-translationally, O-GlcNAcylation at Ser-221 increases the stability of HAS2 and plasma membrane localization. Ubiquitination at Lys-190; this ubiquitination is essential for hyaluronan synthase activity and homo- or hetero-oligomerization. Can also be poly-ubiquitinated. Deubiquitinated by USP17L22/USP17 and USP4. USP17L22/USP17 efficiently removes 'Lys-63'- and 'Lys-48'-linked polyubiquitin chains, whereas USP4 preferentially removes monoubiquitination and, partially, both 'Lys-63'- and 'Lys-48'-linked polyubiquitin chain. In terms of tissue distribution, overexpressed in skin fibroblasts.

Its subcellular location is the cell membrane. The protein resides in the endoplasmic reticulum membrane. The protein localises to the vesicle. It localises to the golgi apparatus membrane. It is found in the lysosome. It carries out the reaction [hyaluronan](n) + UDP-N-acetyl-alpha-D-glucosamine = N-acetyl-beta-D-glucosaminyl-(1-&gt;4)-[hyaluronan](n) + UDP + H(+). The catalysed reaction is N-acetyl-beta-D-glucosaminyl-(1-&gt;4)-[hyaluronan](n) + UDP-alpha-D-glucuronate = [hyaluronan](n+1) + UDP + H(+). Its pathway is glycan biosynthesis; hyaluronan biosynthesis. Catalyzes the addition of GlcNAc or GlcUA monosaccharides to the nascent hyaluronan polymer. Therefore, it is essential to hyaluronan synthesis a major component of most extracellular matrices that has a structural role in tissues architectures and regulates cell adhesion, migration and differentiation. This is one of three isoenzymes responsible for cellular hyaluronan synthesis and it is particularly responsible for the synthesis of high molecular mass hyaluronan. The polypeptide is Hyaluronan synthase 2 (Has2) (Heterocephalus glaber (Naked mole rat)).